Consider the following 892-residue polypeptide: Alanine--tRNA ligase (892 aa).

4 residues coordinate Zn(2+): His565, His569, Cys675, and His679. Residues 852–871 (MGGKGGGGRPDMAQAGGPEA) form a disordered region.

It belongs to the class-II aminoacyl-tRNA synthetase family. The cofactor is Zn(2+).

The protein localises to the cytoplasm. It carries out the reaction tRNA(Ala) + L-alanine + ATP = L-alanyl-tRNA(Ala) + AMP + diphosphate. Its function is as follows. Catalyzes the attachment of alanine to tRNA(Ala) in a two-step reaction: alanine is first activated by ATP to form Ala-AMP and then transferred to the acceptor end of tRNA(Ala). Also edits incorrectly charged Ser-tRNA(Ala) and Gly-tRNA(Ala) via its editing domain. This chain is Alanine--tRNA ligase, found in Parvibaculum lavamentivorans (strain DS-1 / DSM 13023 / NCIMB 13966).